Reading from the N-terminus, the 127-residue chain is Aspartate 1-decarboxylase (127 aa).

Catalysis depends on Ser25, which acts as the Schiff-base intermediate with substrate; via pyruvic acid. A Pyruvic acid (Ser) modification is found at Ser25. Position 57 (Thr57) interacts with substrate. Tyr58 serves as the catalytic Proton donor. Residue 73–75 participates in substrate binding; sequence GSA.

The protein belongs to the PanD family. In terms of assembly, heterooctamer of four alpha and four beta subunits. Requires pyruvate as cofactor. Post-translationally, is synthesized initially as an inactive proenzyme, which is activated by self-cleavage at a specific serine bond to produce a beta-subunit with a hydroxyl group at its C-terminus and an alpha-subunit with a pyruvoyl group at its N-terminus.

The protein resides in the cytoplasm. It carries out the reaction L-aspartate + H(+) = beta-alanine + CO2. It functions in the pathway cofactor biosynthesis; (R)-pantothenate biosynthesis; beta-alanine from L-aspartate: step 1/1. Catalyzes the pyruvoyl-dependent decarboxylation of aspartate to produce beta-alanine. The chain is Aspartate 1-decarboxylase from Laribacter hongkongensis (strain HLHK9).